A 458-amino-acid chain; its full sequence is Bifunctional protein GlmU (458 aa).

The interval 1-232 is pyrophosphorylase; it reads MTSSLSVIIL…TFEIEGVNNR (232 aa). Residues 10–13, lysine 24, glutamine 79, 84–85, 106–108, glycine 142, glutamate 157, asparagine 172, and asparagine 230 each bind UDP-N-acetyl-alpha-D-glucosamine; these read LAAG, GT, and YGD. Mg(2+) is bound at residue aspartate 108. Position 230 (asparagine 230) interacts with Mg(2+). Residues 233–253 are linker; the sequence is QQLASLERTWQGKLVADLQEA. The interval 254-458 is N-acetyltransferase; it reads GVQFADPTRV…KNDFKRPTKK (205 aa). UDP-N-acetyl-alpha-D-glucosamine contacts are provided by arginine 336 and lysine 354. Histidine 366 (proton acceptor) is an active-site residue. The UDP-N-acetyl-alpha-D-glucosamine site is built by tyrosine 369 and asparagine 380. Acetyl-CoA is bound by residues alanine 383, 389-390, serine 408, alanine 426, and arginine 443; that span reads NY.

It in the N-terminal section; belongs to the N-acetylglucosamine-1-phosphate uridyltransferase family. In the C-terminal section; belongs to the transferase hexapeptide repeat family. As to quaternary structure, homotrimer. Mg(2+) serves as cofactor.

The protein resides in the cytoplasm. It catalyses the reaction alpha-D-glucosamine 1-phosphate + acetyl-CoA = N-acetyl-alpha-D-glucosamine 1-phosphate + CoA + H(+). It carries out the reaction N-acetyl-alpha-D-glucosamine 1-phosphate + UTP + H(+) = UDP-N-acetyl-alpha-D-glucosamine + diphosphate. It functions in the pathway nucleotide-sugar biosynthesis; UDP-N-acetyl-alpha-D-glucosamine biosynthesis; N-acetyl-alpha-D-glucosamine 1-phosphate from alpha-D-glucosamine 6-phosphate (route II): step 2/2. It participates in nucleotide-sugar biosynthesis; UDP-N-acetyl-alpha-D-glucosamine biosynthesis; UDP-N-acetyl-alpha-D-glucosamine from N-acetyl-alpha-D-glucosamine 1-phosphate: step 1/1. The protein operates within bacterial outer membrane biogenesis; LPS lipid A biosynthesis. Functionally, catalyzes the last two sequential reactions in the de novo biosynthetic pathway for UDP-N-acetylglucosamine (UDP-GlcNAc). The C-terminal domain catalyzes the transfer of acetyl group from acetyl coenzyme A to glucosamine-1-phosphate (GlcN-1-P) to produce N-acetylglucosamine-1-phosphate (GlcNAc-1-P), which is converted into UDP-GlcNAc by the transfer of uridine 5-monophosphate (from uridine 5-triphosphate), a reaction catalyzed by the N-terminal domain. The chain is Bifunctional protein GlmU from Psychrobacter cryohalolentis (strain ATCC BAA-1226 / DSM 17306 / VKM B-2378 / K5).